A 129-amino-acid polypeptide reads, in one-letter code: MEFRVVISDPKTGRAYQKVVEGANANRLIGKQIGDVISGTIVDLPPDYELKITGGTDRDGFPMRPDLPGTARRRLLLSGGVGFRPKEKGLRKRKGVRGRVISKDILQINTVVVKHGKVPLEEIFKQKEE.

This sequence belongs to the eukaryotic ribosomal protein eS6 family.

The chain is Small ribosomal subunit protein eS6 from Archaeoglobus fulgidus (strain ATCC 49558 / DSM 4304 / JCM 9628 / NBRC 100126 / VC-16).